The primary structure comprises 302 residues: Ubiquinone biosynthesis protein COQ4, mitochondrial (302 aa).

Residues 1–19 (MNSSPARAVRALVQSQSRQ) constitute a mitochondrion transit peptide. Zn(2+) is bound by residues histidine 176, aspartate 177, histidine 180, and glutamate 192. Residues 268-282 (PPPDMRDARKRERDA) show a composition bias toward basic and acidic residues. The segment at 268-302 (PPPDMRDARKRERDARRRRKQLETEAQQGLDAASL) is disordered.

This sequence belongs to the COQ4 family. Component of a multi-subunit COQ enzyme complex, composed of at least COQ3, COQ4, COQ5, COQ6, COQ7 and COQ9. Zn(2+) serves as cofactor.

The protein localises to the mitochondrion inner membrane. The catalysed reaction is a 4-hydroxy-3-methoxy-5-(all-trans-polyprenyl)benzoate + H(+) = a 2-methoxy-6-(all-trans-polyprenyl)phenol + CO2. It functions in the pathway cofactor biosynthesis; ubiquinone biosynthesis. Functionally, lyase that catalyzes the C1-decarboxylation of 4-hydroxy-3-methoxy-5-(all-trans-polyprenyl)benzoic acid into 2-methoxy-6-(all-trans-polyprenyl)phenol during ubiquinone biosynthesis. The sequence is that of Ubiquinone biosynthesis protein COQ4, mitochondrial from Pyricularia oryzae (strain 70-15 / ATCC MYA-4617 / FGSC 8958) (Rice blast fungus).